A 338-amino-acid chain; its full sequence is MDKQRVAVIGPGSWGTALSQVLNDNGHEVRIWGNIAEQIDEINQAHTNTRYFKDTVLDEKIKAYHSLAEALDGADAVLFVVPTKVTRLVAKQVAQILDHNVKVMHASKGLEPDSHERISTILEEEIPSELRSEIVVVSGPSHAEETIVRDITLITAASKDLEAAKYVQKLFSNHYFRLYTNTDVVGVETAGALKNIIAVGAGALHGLGYGDNAKAAIITRGLAEITRLGVKLGASPLTYSGLSGVGDLIVTGTSIHSRNWRAGDALGRGEKLADIEANMGMVIEGISTTKAAYELAQELDVYMPITQAIYKVIYQGHDIKEAIFEIMNNEFKAENEWS.

3 residues coordinate NADPH: Ser-13, Trp-14, and Lys-108. 3 residues coordinate sn-glycerol 3-phosphate: Lys-108, Gly-139, and Ser-141. Ala-143 is an NADPH binding site. Residues Lys-194, Asp-247, Ser-257, Arg-258, and Asn-259 each coordinate sn-glycerol 3-phosphate. The Proton acceptor role is filled by Lys-194. Arg-258 serves as a coordination point for NADPH. NADPH is bound by residues Val-282 and Glu-284.

This sequence belongs to the NAD-dependent glycerol-3-phosphate dehydrogenase family.

The protein resides in the cytoplasm. It catalyses the reaction sn-glycerol 3-phosphate + NAD(+) = dihydroxyacetone phosphate + NADH + H(+). It carries out the reaction sn-glycerol 3-phosphate + NADP(+) = dihydroxyacetone phosphate + NADPH + H(+). It participates in membrane lipid metabolism; glycerophospholipid metabolism. Catalyzes the reduction of the glycolytic intermediate dihydroxyacetone phosphate (DHAP) to sn-glycerol 3-phosphate (G3P), the key precursor for phospholipid synthesis. In Streptococcus gordonii (strain Challis / ATCC 35105 / BCRC 15272 / CH1 / DL1 / V288), this protein is Glycerol-3-phosphate dehydrogenase [NAD(P)+].